A 523-amino-acid chain; its full sequence is NADP-specific glutamate dehydrogenase (523 aa).

The tract at residues 26–50 is disordered; sequence CARGRSAKRDVAAKRLRSRSPRMDA. Lys202 is a catalytic residue.

It belongs to the Glu/Leu/Phe/Val dehydrogenases family. As to quaternary structure, homo- and heterohexamer of alpha and beta subunits. Both subunits are encoded by the same gene. The N-termini of the alpha and the beta chains are blocked.

It localises to the plastid. Its subcellular location is the chloroplast. It carries out the reaction L-glutamate + NADP(+) + H2O = 2-oxoglutarate + NH4(+) + NADPH + H(+). This Chlorella sorokiniana (Freshwater green alga) protein is NADP-specific glutamate dehydrogenase.